The primary structure comprises 557 residues: Aerobic glycerol-3-phosphate dehydrogenase (557 aa).

21-49 (DVVIIGGGITGAGIALDASERGMKVALVE) serves as a coordination point for FAD.

Belongs to the FAD-dependent glycerol-3-phosphate dehydrogenase family. FAD serves as cofactor.

The protein resides in the cytoplasm. It carries out the reaction a quinone + sn-glycerol 3-phosphate = dihydroxyacetone phosphate + a quinol. It functions in the pathway polyol metabolism; glycerol degradation via glycerol kinase pathway; glycerone phosphate from sn-glycerol 3-phosphate (aerobic route): step 1/1. The sequence is that of Aerobic glycerol-3-phosphate dehydrogenase (glpD) from Staphylococcus saprophyticus subsp. saprophyticus (strain ATCC 15305 / DSM 20229 / NCIMB 8711 / NCTC 7292 / S-41).